A 256-amino-acid polypeptide reads, in one-letter code: 5-oxoprolinase subunit A (256 aa).

The protein belongs to the LamB/PxpA family. In terms of assembly, forms a complex composed of PxpA, PxpB and PxpC.

The enzyme catalyses 5-oxo-L-proline + ATP + 2 H2O = L-glutamate + ADP + phosphate + H(+). Catalyzes the cleavage of 5-oxoproline to form L-glutamate coupled to the hydrolysis of ATP to ADP and inorganic phosphate. The protein is 5-oxoprolinase subunit A of Azoarcus sp. (strain BH72).